The following is a 426-amino-acid chain: Glutamate-1-semialdehyde 2,1-aminomutase 2 (426 aa).

The residue at position 265 (lysine 265) is an N6-(pyridoxal phosphate)lysine.

The protein belongs to the class-III pyridoxal-phosphate-dependent aminotransferase family. HemL subfamily. Homodimer. Pyridoxal 5'-phosphate is required as a cofactor.

Its subcellular location is the cytoplasm. It catalyses the reaction (S)-4-amino-5-oxopentanoate = 5-aminolevulinate. It functions in the pathway porphyrin-containing compound metabolism; protoporphyrin-IX biosynthesis; 5-aminolevulinate from L-glutamyl-tRNA(Glu): step 2/2. In Lachnoclostridium phytofermentans (strain ATCC 700394 / DSM 18823 / ISDg) (Clostridium phytofermentans), this protein is Glutamate-1-semialdehyde 2,1-aminomutase 2.